Consider the following 1588-residue polypeptide: Multicopy suppressor of chk1 protein 1 (1588 aa).

The tract at residues 38-60 (HAKPSTQQQQQQQNISNETTSTG) is disordered. Polar residues predominate over residues 51–60 (NISNETTSTG). In terms of domain architecture, JmjN spans 82–124 (NVRVTPKKEEFSRGLDFISDLYDQTARKSGAVRVIPPDNWKCP). The PHD-type 1 zinc finger occupies 298–345 (KCKLCAQEGSSLVTCCICQSNYHYACVEAPFAPFSDIHYWTCNSCIPS). Positions 385–395 (PLTLPSNTKTP) are enriched in polar residues. A disordered region spans residues 385 to 412 (PLTLPSNTKTPPASARQSSRRTRSTSGK). The region spanning 475 to 645 (FPTSRQNAYY…DMHAENSFNM (171 aa)) is the JmjC domain. Residues 848-872 (EKRKPKRGSATHSHLESPSEEVEDL) are disordered. A PHD-type 2 zinc finger spans residues 1171–1220 (FHYCFCRQPEAGMMIECELCHEWYHAKCMKMSKKKLRADEKFICPICDYR). Positions 1319–1341 (APQPPPFIGESRSNRKPRPTKRQ) are disordered. The PHD-type 3 zinc finger occupies 1454–1505 (SVICLCRQPFAISDGTVQCHNCLEWFHYECVGLSSDIVSTLSNYACPDCCSK).

Its subcellular location is the nucleus. Its function is as follows. Has a role in regulating chromatin structure via global deacetylation of histone H3. This function is associated with the activity of a histone deacetylase. The sequence is that of Multicopy suppressor of chk1 protein 1 (msc1) from Schizosaccharomyces pombe (strain 972 / ATCC 24843) (Fission yeast).